Here is a 353-residue protein sequence, read N- to C-terminus: Probable D-xylulose reductase A (353 aa).

Cys42, His67, and Glu68 together coordinate Zn(2+). NAD(+) is bound at residue Gly177–Gly182.

This sequence belongs to the zinc-containing alcohol dehydrogenase family. The cofactor is Zn(2+).

The catalysed reaction is xylitol + NAD(+) = D-xylulose + NADH + H(+). Its pathway is carbohydrate degradation; L-arabinose degradation via L-arabinitol; D-xylulose 5-phosphate from L-arabinose (fungal route): step 4/5. Functionally, xylitol dehydrogenase which catalyzes the conversion of xylitol to D-xylulose. Xylose is a major component of hemicelluloses such as xylan. Most fungi utilize D-xylose via three enzymatic reactions, xylose reductase (XR), xylitol dehydrogenase (XDH), and xylulokinase, to form xylulose 5-phosphate, which enters pentose phosphate pathway. The sequence is that of Probable D-xylulose reductase A (xdhA) from Aspergillus terreus (strain NIH 2624 / FGSC A1156).